We begin with the raw amino-acid sequence, 388 residues long: GTPase Obg (388 aa).

One can recognise an Obg domain in the interval 1-159 (MKFVDEAVIR…RSLKLELLLL (159 aa)). The OBG-type G domain maps to 160–333 (ADVGLLGMPN…LAAKLWDFIQ (174 aa)). GTP is bound by residues 166-173 (GMPNAGKS), 191-195 (FTTLV), 213-216 (DIPG), 283-286 (NKAD), and 314-316 (SAY). Mg(2+) is bound by residues Ser-173 and Thr-193.

It belongs to the TRAFAC class OBG-HflX-like GTPase superfamily. OBG GTPase family. Monomer. Mg(2+) is required as a cofactor.

The protein localises to the cytoplasm. In terms of biological role, an essential GTPase which binds GTP, GDP and possibly (p)ppGpp with moderate affinity, with high nucleotide exchange rates and a fairly low GTP hydrolysis rate. Plays a role in control of the cell cycle, stress response, ribosome biogenesis and in those bacteria that undergo differentiation, in morphogenesis control. This is GTPase Obg from Shewanella oneidensis (strain ATCC 700550 / JCM 31522 / CIP 106686 / LMG 19005 / NCIMB 14063 / MR-1).